The chain runs to 96 residues: Protein Vpr (96 aa).

The interval 1-42 (MEQAPEDQGPQREPYNEWTLELLEELKNEAVRHFPRPWLHGL) is homooligomerization. The residue at position 79 (Ser79) is a Phosphoserine; by host.

This sequence belongs to the HIV-1 VPR protein family. In terms of assembly, homooligomer, may form homodimer. Interacts with p6-gag region of the Pr55 Gag precursor protein through a (Leu-X-X)4 motif near the C-terminus of the P6gag protein. Interacts with host UNG. May interact with host RAD23A/HHR23A. Interacts with host VPRBP/DCAF1, leading to hijack the CUL4A-RBX1-DDB1-DCAF1/VPRBP complex, mediating ubiquitination of host proteins such as TERT and ZGPAT and arrest of the cell cycle in G2 phase. Phosphorylated on several residues by host. These phosphorylations regulate VPR activity for the nuclear import of the HIV-1 pre-integration complex.

The protein resides in the virion. It localises to the host nucleus. It is found in the host extracellular space. Its function is as follows. During virus replication, may deplete host UNG protein, and incude G2-M cell cycle arrest. Acts by targeting specific host proteins for degradation by the 26S proteasome, through association with the cellular CUL4A-DDB1 E3 ligase complex by direct interaction with host VPRPB/DCAF-1. Cell cycle arrest reportedly occurs within hours of infection and is not blocked by antiviral agents, suggesting that it is initiated by the VPR carried into the virion. Additionally, VPR induces apoptosis in a cell cycle dependent manner suggesting that these two effects are mechanistically linked. Detected in the serum and cerebrospinal fluid of AIDS patient, VPR may also induce cell death to bystander cells. Functionally, during virus entry, plays a role in the transport of the viral pre-integration (PIC) complex to the host nucleus. This function is crucial for viral infection of non-dividing macrophages. May act directly at the nuclear pore complex, by binding nucleoporins phenylalanine-glycine (FG)-repeat regions. The sequence is that of Protein Vpr from Human immunodeficiency virus type 1 group M subtype G (isolate 92NG083) (HIV-1).